A 264-amino-acid polypeptide reads, in one-letter code: 4-oxalocrotonate decarboxylase (264 aa).

This sequence belongs to the hydratase/decarboxylase family.

It catalyses the reaction (3E)-2-oxohex-3-enedioate + H(+) = 2-oxopent-4-enoate + CO2. Its pathway is aromatic compound metabolism; benzoate degradation via hydroxylation. This is 4-oxalocrotonate decarboxylase (dmpH) from Pseudomonas sp. (strain CF600).